The chain runs to 372 residues: N-acetylneuraminate-9-phosphate synthase (372 aa).

The AFP-like domain maps to 314-372; it reads SIVAARNLNKGYRLQLADMAIKVSEPSGLTAEDFLDLVGKELADNIGEDEPILGNSIIN.

It catalyses the reaction aldehydo-N-acetyl-D-mannosamine 6-phosphate + phosphoenolpyruvate + H2O = N-acetylneuraminate 9-phosphate + phosphate. The catalysed reaction is aldehydo-D-mannose 6-phosphate + phosphoenolpyruvate + H2O = 3-deoxy-D-glycero-beta-D-galacto-non-2-ulopyranosonate 9-phosphate + phosphate. Its function is as follows. Catalyzes the condensation of phosphoenolpyruvate (PEP) and N-acetylmannosamine 6-phosphate (ManNAc-6-P) or D-mannose 6-phosphate (Man-6-P) to generate the phosphorylated forms of both the sialic acids N-acetylneuraminic acid (Neu5Ac) and deaminoneuraminic acid (KDN), respectively. Essential for biosynthesis of sialic acids in neurons of the central nervous system. The sequence is that of N-acetylneuraminate-9-phosphate synthase from Drosophila melanogaster (Fruit fly).